Reading from the N-terminus, the 285-residue chain is Protein HtrL (285 aa).

This is Protein HtrL from Escherichia coli (strain K12).